The chain runs to 855 residues: DNA mismatch repair protein MutS (855 aa).

Residue 613 to 620 participates in ATP binding; the sequence is GPNMGGKS. The tract at residues 796-816 is disordered; the sequence is TTSLPHEMPSQQSGKPASPMQ.

This sequence belongs to the DNA mismatch repair MutS family.

Its function is as follows. This protein is involved in the repair of mismatches in DNA. It is possible that it carries out the mismatch recognition step. This protein has a weak ATPase activity. This Pseudomonas aeruginosa (strain LESB58) protein is DNA mismatch repair protein MutS.